A 230-amino-acid polypeptide reads, in one-letter code: Cytidylate kinase (230 aa).

Position 12 to 20 (Gly-12 to Thr-20) interacts with ATP.

Belongs to the cytidylate kinase family. Type 1 subfamily.

It localises to the cytoplasm. The enzyme catalyses CMP + ATP = CDP + ADP. The catalysed reaction is dCMP + ATP = dCDP + ADP. This Shewanella sp. (strain W3-18-1) protein is Cytidylate kinase.